A 310-amino-acid polypeptide reads, in one-letter code: Proline iminopeptidase (310 aa).

Residues 41–288 form the AB hydrolase-1 domain; that stretch reads LVTLHGGPGG…NSSHMAMWEE (248 aa). Ser-116 (nucleophile) is an active-site residue. Asp-255 is an active-site residue. Catalysis depends on His-282, which acts as the Proton donor.

Belongs to the peptidase S33 family. Part of the tricorn proteolytic complex.

The enzyme catalyses Release of N-terminal proline from a peptide.. Cleaves H-Pro-AMC as well as a wide spectrum of amino acid substrates and several peptide substrates without a proline at the N-terminus. In conjunction with the three factors F1, F2 and F3, Tricorn degrades oligopeptides in a sequential manner, yielding free amino acids. The protein is Proline iminopeptidase (pip) of Saccharolobus solfataricus (strain ATCC 35092 / DSM 1617 / JCM 11322 / P2) (Sulfolobus solfataricus).